Reading from the N-terminus, the 355-residue chain is Elongation factor Ts, mitochondrial (355 aa).

Residues Met-1–Val-46 constitute a mitochondrion transit peptide.

It belongs to the EF-Ts family.

It is found in the mitochondrion. In terms of biological role, associates with the EF-Tu.GDP complex and induces the exchange of GDP to GTP. It remains bound to the aminoacyl-tRNA.EF-Tu.GTP complex up to the GTP hydrolysis stage on the ribosome. The sequence is that of Elongation factor Ts, mitochondrial (tsfm) from Dictyostelium discoideum (Social amoeba).